Consider the following 602-residue polypeptide: 4-hydroxy-3-methylbut-2-en-1-yl diphosphate synthase (flavodoxin) (602 aa).

Positions 508, 511, 543, and 550 each coordinate [4Fe-4S] cluster.

The protein belongs to the IspG family. The cofactor is [4Fe-4S] cluster.

The enzyme catalyses (2E)-4-hydroxy-3-methylbut-2-enyl diphosphate + oxidized [flavodoxin] + H2O + 2 H(+) = 2-C-methyl-D-erythritol 2,4-cyclic diphosphate + reduced [flavodoxin]. It participates in isoprenoid biosynthesis; isopentenyl diphosphate biosynthesis via DXP pathway; isopentenyl diphosphate from 1-deoxy-D-xylulose 5-phosphate: step 5/6. Its function is as follows. Converts 2C-methyl-D-erythritol 2,4-cyclodiphosphate (ME-2,4cPP) into 1-hydroxy-2-methyl-2-(E)-butenyl 4-diphosphate. This Chlamydia trachomatis serovar L2b (strain UCH-1/proctitis) protein is 4-hydroxy-3-methylbut-2-en-1-yl diphosphate synthase (flavodoxin).